Here is a 517-residue protein sequence, read N- to C-terminus: MDKDNQALDELPMMTGSKHANKRLFAAFMIFGLLNNVLYVIILSAALDLVSADTPKGVVALFNIFPALITKVVWPLLSNGKIRYTRRVGFCTICSWFGIITIALSSSLSPRLLGISLASLSSGMGELTFLQLTTTLPTEATSKTALGAWSSGTGFAGVAGAGIWWLLRGLGVKGGLGLSSFLPLFFPITYKYILPPFSHLEASSDSSPYQRLPTSSSLSNNNNFRPPAILISVPSSEYVPQHTPLLSSGFIDRDRDRNRDGEELTDGDKRLMGMRASRLTTQEKMKLLRPLVVRYMLPLCAVYVEEYVINSGVAPTLVFPLPTYGLWSWLFKSPRDYYPFWSLTYQTFVFLSRSSLSLGLPPIPKRLLPLPAIIQFLVLSLLFLQAKTFFFSSPAYTPPADGDGGVDRSITIVFLLICLEGLCGGSGYVNTFYHVGREGSSVSENYDADGENEMGGDRRTLNVTEMEKKAMEREFRIGAVGAADSTGILFASLISMPLEIALCRSQVDQGRTMCREL.

Helical transmembrane passes span 24 to 44 (LFAA…IILS), 57 to 77 (GVVA…WPLL), 88 to 108 (VGFC…SSSL), 112 to 132 (LLGI…FLQL), 146 to 166 (LGAW…IWWL), 169 to 189 (GLGV…FPIT), 371 to 391 (PAII…TFFF), and 409 to 429 (SITI…SGYV).

This sequence belongs to the battenin family.

It localises to the vacuole membrane. Its function is as follows. Involved in vacuolar transport and vacuole pH homeostasis. Also required for cytokinesis. This Cryptococcus neoformans var. neoformans serotype D (strain B-3501A) (Filobasidiella neoformans) protein is Protein BTN1 (BTN1).